A 394-amino-acid chain; its full sequence is Phosphoglycerate kinase (394 aa).

Residues 21-23, Arg-36, 59-62, Arg-118, and Arg-151 contribute to the substrate site; these read DFN and HLGR. Ser-183 bears the Phosphoserine mark. Lys-201 serves as a coordination point for ATP. Phosphothreonine is present on Thr-299. Residues Glu-323 and 350–353 contribute to the ATP site; that span reads GGDS.

Belongs to the phosphoglycerate kinase family. Monomer.

It localises to the cytoplasm. It catalyses the reaction (2R)-3-phosphoglycerate + ATP = (2R)-3-phospho-glyceroyl phosphate + ADP. It participates in carbohydrate degradation; glycolysis; pyruvate from D-glyceraldehyde 3-phosphate: step 2/5. This Bacillus pumilus (strain SAFR-032) protein is Phosphoglycerate kinase.